The following is a 454-amino-acid chain: tRNA modification GTPase MnmE (454 aa).

Residues Arg23, Glu80, and Lys120 each coordinate (6S)-5-formyl-5,6,7,8-tetrahydrofolate. The region spanning 216–377 (GMKVVIAGRP…LRNHLKQSMG (162 aa)) is the TrmE-type G domain. Asn226 contributes to the K(+) binding site. Residues 226–231 (NAGKSS), 245–251 (TDIAGTT), 270–273 (DTAG), 335–338 (NKAD), and 358–360 (SAR) contribute to the GTP site. Mg(2+) is bound at residue Ser230. The K(+) site is built by Thr245, Ile247, and Thr250. Thr251 provides a ligand contact to Mg(2+). Residue Lys454 coordinates (6S)-5-formyl-5,6,7,8-tetrahydrofolate.

This sequence belongs to the TRAFAC class TrmE-Era-EngA-EngB-Septin-like GTPase superfamily. TrmE GTPase family. In terms of assembly, homodimer. Heterotetramer of two MnmE and two MnmG subunits. It depends on K(+) as a cofactor.

It localises to the cytoplasm. Exhibits a very high intrinsic GTPase hydrolysis rate. Involved in the addition of a carboxymethylaminomethyl (cmnm) group at the wobble position (U34) of certain tRNAs, forming tRNA-cmnm(5)s(2)U34. The chain is tRNA modification GTPase MnmE from Escherichia coli (strain 55989 / EAEC).